The primary structure comprises 367 residues: Flagellin 2 (367 aa).

Belongs to the bacterial flagellin family.

It localises to the secreted. It is found in the bacterial flagellum. Flagellin is the subunit protein which polymerizes to form the filaments of bacterial flagella. The sequence is that of Flagellin 2 (fliC2) from Proteus mirabilis.